We begin with the raw amino-acid sequence, 69 residues long: MMSKLGVLLTICLLLFPLSALPLDGDQPADQPAERVQDISPDQNPLFHLVKRGCCPYPKCIHVTFCKCC.

Positions 1–20 are cleaved as a signal peptide; sequence MMSKLGVLLTICLLLFPLSA. The propeptide occupies 21–52; sequence LPLDGDQPADQPAERVQDISPDQNPLFHLVKR. Cystine bridges form between cysteine 54–cysteine 68, cysteine 55–cysteine 66, and cysteine 60–cysteine 69.

The protein belongs to the conotoxin M superfamily. Expressed by the venom duct.

The protein resides in the secreted. The polypeptide is Conotoxin reg3.6 (Conus regius (Crown cone)).